The sequence spans 64 residues: Large ribosomal subunit protein bL28 (64 aa).

The protein belongs to the bacterial ribosomal protein bL28 family.

The chain is Large ribosomal subunit protein bL28 from Syntrophobacter fumaroxidans (strain DSM 10017 / MPOB).